The sequence spans 397 residues: MKILVVNCGSSSLKYQLIDITSEEALAKGLVERIGIEGSILTQKVNGEKYIIEEPMKDHKKAIELVLKALVDKEHGVISDMSEIAAVGHRVVHGGEKYASSVLIDDEVMKALEDCVKLAPLHNPPNIIGINACRELMPKTPMVAVFDTAFHQTLPDYAYMYPLPYELYEQNGIRKYGFHGTSHRYVSSVASEMMEKDLKDLKVITCHLGNGASLCAVKEGKSVETSMGFTPLAGLAMGTRCGDIDPAILLFMERELKMSPDEVDTVINKKSGVLGISGVSSDFRDIEGAAEEGNKRAKLALDVYHYTVRQTIGAYTAVLNGVDAIVFTAGLGENSAASREEILNGLEYLGIKIDAEKNKQRGKQIEISTEDSKVKVFVIPTDEELMIARDTKEITVK.

Asn7 provides a ligand contact to Mg(2+). An ATP-binding site is contributed by Lys14. Arg90 serves as a coordination point for substrate. The active-site Proton donor/acceptor is the Asp147. ATP-binding positions include 207 to 211 (HLGNG), 282 to 284 (DFR), and 330 to 334 (GLGEN). Glu383 is a Mg(2+) binding site.

This sequence belongs to the acetokinase family. Homodimer. Mg(2+) serves as cofactor. Requires Mn(2+) as cofactor.

The protein localises to the cytoplasm. The catalysed reaction is acetate + ATP = acetyl phosphate + ADP. The protein operates within metabolic intermediate biosynthesis; acetyl-CoA biosynthesis; acetyl-CoA from acetate: step 1/2. Its function is as follows. Catalyzes the formation of acetyl phosphate from acetate and ATP. Can also catalyze the reverse reaction. This chain is Acetate kinase, found in Clostridium botulinum (strain Okra / Type B1).